The chain runs to 116 residues: Ribosome-binding factor A (116 aa).

It belongs to the RbfA family. As to quaternary structure, monomer. Binds 30S ribosomal subunits, but not 50S ribosomal subunits or 70S ribosomes.

The protein localises to the cytoplasm. Functionally, one of several proteins that assist in the late maturation steps of the functional core of the 30S ribosomal subunit. Associates with free 30S ribosomal subunits (but not with 30S subunits that are part of 70S ribosomes or polysomes). Required for efficient processing of 16S rRNA. May interact with the 5'-terminal helix region of 16S rRNA. The protein is Ribosome-binding factor A of Mycoplasma pneumoniae (strain ATCC 29342 / M129 / Subtype 1) (Mycoplasmoides pneumoniae).